The sequence spans 245 residues: Orotidine 5'-phosphate decarboxylase (245 aa).

Substrate contacts are provided by residues D22, K44, 71–80 (DLKFHDIPNT), T131, R192, Q201, G221, and R222. K73 functions as the Proton donor in the catalytic mechanism.

The protein belongs to the OMP decarboxylase family. Type 1 subfamily. Homodimer.

The enzyme catalyses orotidine 5'-phosphate + H(+) = UMP + CO2. The protein operates within pyrimidine metabolism; UMP biosynthesis via de novo pathway; UMP from orotate: step 2/2. Catalyzes the decarboxylation of orotidine 5'-monophosphate (OMP) to uridine 5'-monophosphate (UMP). The protein is Orotidine 5'-phosphate decarboxylase of Salmonella gallinarum (strain 287/91 / NCTC 13346).